We begin with the raw amino-acid sequence, 415 residues long: Corticotropin-releasing factor receptor 1 (415 aa).

The signal sequence occupies residues 1 to 23; that stretch reads MGQRPQLRLVKALLLLGLNPVST. The Extracellular segment spans residues 24–111; that stretch reads SLQDQQCESL…CQEILNEEKK (88 aa). Cystine bridges form between cysteine 30–cysteine 54, cysteine 44–cysteine 87, and cysteine 68–cysteine 102. N-linked (GlcNAc...) asparagine glycosylation is found at asparagine 38, asparagine 45, asparagine 78, asparagine 90, and asparagine 98. The tract at residues 99-108 is important for peptide agonist binding; that stretch reads YSECQEILNE. Residues 112–142 traverse the membrane as a helical segment; the sequence is SKVHYHIAVIINYLGHCISLVALLVAFVLFL. The Cytoplasmic portion of the chain corresponds to 143-149; it reads RLRSIRC. Residues 150–174 form a helical membrane-spanning segment; the sequence is LRNIIHWNLISAFILRNATWFVVQL. Residues 175–189 are Extracellular-facing; the sequence is TVSPEVHQSNVAWCR. Residues cysteine 188 and cysteine 258 are joined by a disulfide bond. A helical transmembrane segment spans residues 190-218; it reads LVTAAYNYFHVTNFFWMFGEGCYLHTAIV. The Cytoplasmic portion of the chain corresponds to 219–225; sequence LTYSTDR. Residues 226–253 traverse the membrane as a helical segment; it reads LRKWMFVCIGWGVPFPIIVAWAIGKLYY. Residues 254–269 are Extracellular-facing; it reads DNEKCWFGKRPGVYTD. Residues 270-295 form a helical membrane-spanning segment; the sequence is YIYQGPMILVLLINFIFLFNIVRILM. The interval 280–290 is important for antagonist binding; it reads LLINFIFLFNI. At 296-306 the chain is on the cytoplasmic side; sequence TKLRASTTSET. Serine 301 carries the post-translational modification Phosphoserine; by PKA. Residues 307–331 form a helical membrane-spanning segment; the sequence is IQYRKAVKATLVLLPLLGITYMLFF. Residues 332–338 are Extracellular-facing; it reads VNPGEDE. Residues 339-368 traverse the membrane as a helical segment; sequence VSRVVFIYFNSFLESFQGFFVSVFYCFLNS. The Cytoplasmic portion of the chain corresponds to 369-415; the sequence is EVRSAIRKRWRRWQDKHSIRARVARAMSIPTSPTRVSFHSIKQSTAV.

The protein belongs to the G-protein coupled receptor 2 family. Heterodimer; heterodimerizes with GPER1. Interacts (via N-terminal extracellular domain) with CRH and UCN. Interacts with DLG1; this inhibits endocytosis of CRHR1 after agonist binding. Post-translationally, C-terminal Ser or Thr residues may be phosphorylated. In terms of processing, phosphorylation at Ser-301 by PKA prevents maximal coupling to Gq-protein, and thereby negatively regulates downstream signaling. Detected in brain cortex (at protein level).

The protein localises to the cell membrane. It is found in the endosome. In terms of biological role, G-protein coupled receptor for CRH (corticotropin-releasing factor) and UCN (urocortin). Has high affinity for CRH and UCN. Ligand binding causes a conformation change that triggers signaling via guanine nucleotide-binding proteins (G proteins) and down-stream effectors, such as adenylate cyclase. Promotes the activation of adenylate cyclase, leading to increased intracellular cAMP levels. Inhibits the activity of the calcium channel CACNA1H. Required for normal embryonic development of the adrenal gland and for normal hormonal responses to stress. Plays a role in the response to anxiogenic stimuli. The protein is Corticotropin-releasing factor receptor 1 (Crhr1) of Mus musculus (Mouse).